The sequence spans 312 residues: Homoserine O-succinyltransferase (312 aa).

Cysteine 142 (acyl-thioester intermediate) is an active-site residue. Residues lysine 163 and serine 192 each contribute to the substrate site. Catalysis depends on histidine 235, which acts as the Proton acceptor. Glutamate 237 is an active-site residue. Arginine 249 is a binding site for substrate.

Belongs to the MetA family.

It localises to the cytoplasm. It carries out the reaction L-homoserine + succinyl-CoA = O-succinyl-L-homoserine + CoA. It participates in amino-acid biosynthesis; L-methionine biosynthesis via de novo pathway; O-succinyl-L-homoserine from L-homoserine: step 1/1. Transfers a succinyl group from succinyl-CoA to L-homoserine, forming succinyl-L-homoserine. This chain is Homoserine O-succinyltransferase, found in Shewanella halifaxensis (strain HAW-EB4).